The sequence spans 462 residues: uncharacterized protein (462 aa).

7 WD repeats span residues 170–209 (GGERPIAIVRFSNNGNHFASGSWGGQVKVWNSDNLSEVQL), 212–260 (GHTD…PLLR), 263–302 (GHLARVGRVAFHPSGDYLVSASFDTTWRLWDVHTGVELLM), 305–344 (GHSEGIFSIACQPDGSLVSSGGNDAIGRIWDLRSGKSIMV), 347–386 (EHIRQIVAMAWSPNGYQLATSSADDTVKIWDLRKVSLAHT), 389–430 (AHSS…LIKS), and 433–462 (GHEEKVMSVDGYGDRFISSGYDRTIKLWYP).

Its subcellular location is the cytoplasm. This is an uncharacterized protein from Schizosaccharomyces pombe (strain 972 / ATCC 24843) (Fission yeast).